Reading from the N-terminus, the 435-residue chain is Virulence factor PIT1 (435 aa).

5 helical membrane passes run 33–53, 77–97, 111–131, 143–163, and 204–224; these read ETTT…SEVI, IFFI…ILVT, WAWT…CVIG, VASW…MWTN, and TFWF…ACCI. A glycan (N-linked (GlcNAc...) asparagine) is linked at Asn-330. Residues 392–404 are compositionally biased toward polar residues; that stretch reads SPQMPSKAQSQSI. A disordered region spans residues 392-435; the sequence is SPQMPSKAQSQSIPYKREVEVTVDMSPVPPPPGPSPAPLPAPYM. The segment covering 418-435 has biased composition (pro residues); that stretch reads PVPPPPGPSPAPLPAPYM.

Post-translationally, O-mannosylated by PMT4. Is also N-glycosylated.

Its subcellular location is the cell membrane. In terms of biological role, plasma membrane virulence factor required for spreading and inducing tumors in infected leaves. In Mycosarcoma maydis (Corn smut fungus), this protein is Virulence factor PIT1.